The chain runs to 377 residues: Alkane 1-monooxygenase 2 (377 aa).

Helical transmembrane passes span 17–37, 43–63, 87–107, and 116–136; these read GYWI…WSLG, AWPW…DAIV, VLSL…GWIL, and VGQL…GITV. Fe cation contacts are provided by His138, His142, His168, His172, and His173. The chain crosses the membrane as a helical span at residues 236 to 256; it reads ALFLLGFSLAFGWLGAIFFLG. 3 residues coordinate Fe cation: His312, His315, and His316.

It belongs to the fatty acid desaturase type 1 family. AlkB subfamily. Fe(3+) is required as a cofactor.

Its subcellular location is the cell inner membrane. The enzyme catalyses octane + 2 reduced [rubredoxin] + O2 + 2 H(+) = 2 oxidized [rubredoxin] + octan-1-ol + H2O. Its pathway is hydrocarbon metabolism; alkane degradation. Catalyzes the hydroxylation of n-alkanes in the presence of a NADH-rubredoxin reductase and rubredoxin. It preferably hydroxylases C12-C20 hydrocarbons. This Pseudomonas aeruginosa (strain ATCC 15692 / DSM 22644 / CIP 104116 / JCM 14847 / LMG 12228 / 1C / PRS 101 / PAO1) protein is Alkane 1-monooxygenase 2 (alkB2).